A 219-amino-acid polypeptide reads, in one-letter code: MLKLTTTSVTFHVLRYFQLGLSVTNLLLASFAIITNYKVDRILRLSLAVSIISSVYFGIVRFLPVLLIFVMEIVQTVLWFTAFVTLASKFGSMSCSSMPRGINFDYSGSCKIAKIDILPEAVLFILFLATTYASYITVLSQAKENGSSTRSVLKACVKALRDTVDRLETSLEESEPLLDLEVQEDARTETESIEDSTDSEDNANIEQEKVIDGSIEHSS.

Residues 1 to 15 (MLKLTTTSVTFHVLR) lie on the Cytoplasmic side of the membrane. A helical membrane pass occupies residues 16 to 36 (YFQLGLSVTNLLLASFAIITN). Residues 37–41 (YKVDR) lie on the Vacuolar side of the membrane. Residues 42–62 (ILRLSLAVSIISSVYFGIVRF) traverse the membrane as a helical segment. Residue Leu63 is a topological domain, cytoplasmic. The helical transmembrane segment at 64–84 (PVLLIFVMEIVQTVLWFTAFV) threads the bilayer. The Vacuolar segment spans residues 85–116 (TLASKFGSMSCSSMPRGINFDYSGSCKIAKID). Residues 117 to 137 (ILPEAVLFILFLATTYASYIT) traverse the membrane as a helical segment. The Cytoplasmic segment spans residues 138 to 219 (VLSQAKENGS…VIDGSIEHSS (82 aa)). Residues 176-219 (PLLDLEVQEDARTETESIEDSTDSEDNANIEQEKVIDGSIEHSS) are disordered. Residues 191–203 (ESIEDSTDSEDNA) show a composition bias toward acidic residues. Positions 206–219 (EQEKVIDGSIEHSS) are enriched in basic and acidic residues.

It localises to the vacuole membrane. This is an uncharacterized protein from Saccharomyces cerevisiae (strain ATCC 204508 / S288c) (Baker's yeast).